Consider the following 155-residue polypeptide: MKLQLCAVGRLRSGPERDLVEDYLARFERTGRPLGLPPVQLLEFEDRKGGGMEAEADLIAKAVAPGAALVVLDERGRTLSSPEFADHLAHWRDSGRDVALAIGGADGLAPRLRDRADLAMSFGRMVWPHMLVRVMLAEQLYRAATILAGSPYHRV.

Residues Leu72, Gly103, and 122–127 (FGRMVW) each bind S-adenosyl-L-methionine.

The protein belongs to the RNA methyltransferase RlmH family. In terms of assembly, homodimer.

It is found in the cytoplasm. It catalyses the reaction pseudouridine(1915) in 23S rRNA + S-adenosyl-L-methionine = N(3)-methylpseudouridine(1915) in 23S rRNA + S-adenosyl-L-homocysteine + H(+). In terms of biological role, specifically methylates the pseudouridine at position 1915 (m3Psi1915) in 23S rRNA. The sequence is that of Ribosomal RNA large subunit methyltransferase H from Cereibacter sphaeroides (strain ATCC 17023 / DSM 158 / JCM 6121 / CCUG 31486 / LMG 2827 / NBRC 12203 / NCIMB 8253 / ATH 2.4.1.) (Rhodobacter sphaeroides).